Reading from the N-terminus, the 632-residue chain is 2-hydroxyacyl-CoA lyase 2 (632 aa).

The helical transmembrane segment at 10–30 (AWGFFSSFLLLAFGTLVAALL) threads the bilayer. Glu-98 is a binding site for thiamine diphosphate. The tract at residues 470–550 (DFVGTAAYLV…VMALIGNDAG (81 aa)) is thiamine pyrophosphate binding. Mg(2+)-binding residues include Asp-521 and Asn-547.

Belongs to the TPP enzyme family. Requires Mg(2+) as cofactor. Thiamine diphosphate serves as cofactor.

The protein resides in the endoplasmic reticulum membrane. It carries out the reaction 2-hydroxyoctadecanoyl-CoA = heptadecanal + formyl-CoA. The enzyme catalyses (2R)-hydroxyhexadecanoyl-CoA = pentadecanal + formyl-CoA. In terms of biological role, endoplasmic reticulum 2-OH acyl-CoA lyase involved in the cleavage (C1 removal) reaction in the fatty acid alpha-oxydation in a thiamine pyrophosphate (TPP)-dependent manner. Involved in the phytosphingosine degradation pathway. This is 2-hydroxyacyl-CoA lyase 2 (ILVBL) from Bos taurus (Bovine).